The following is a 422-amino-acid chain: Glutamate-1-semialdehyde 2,1-aminomutase (422 aa).

Residue lysine 258 is modified to N6-(pyridoxal phosphate)lysine.

It belongs to the class-III pyridoxal-phosphate-dependent aminotransferase family. HemL subfamily. Homodimer. Requires pyridoxal 5'-phosphate as cofactor.

The protein localises to the cytoplasm. The catalysed reaction is (S)-4-amino-5-oxopentanoate = 5-aminolevulinate. The protein operates within porphyrin-containing compound metabolism; protoporphyrin-IX biosynthesis; 5-aminolevulinate from L-glutamyl-tRNA(Glu): step 2/2. In Chlamydia muridarum (strain MoPn / Nigg), this protein is Glutamate-1-semialdehyde 2,1-aminomutase.